A 241-amino-acid polypeptide reads, in one-letter code: ATP synthase subunit a (241 aa).

5 helical membrane-spanning segments follow: residues 30-50, 91-111, 128-148, 193-213, and 214-234; these read GQVFLTSWILLGALLVFISLG, FIGTLFLFVFVSNWGGALIPW, INTTIALALLVSLSYFYAGLS, LVVGVLVFLVPLILPIPVMFL, and GLFTSAIQALIFATLAAYYIG.

This sequence belongs to the ATPase A chain family. F-type ATPases have 2 components, CF(1) - the catalytic core - and CF(0) - the membrane proton channel. CF(1) has five subunits: alpha(3), beta(3), gamma(1), delta(1), epsilon(1). CF(0) has four main subunits: a, b, b' and c.

The protein resides in the cellular thylakoid membrane. In terms of biological role, key component of the proton channel; it plays a direct role in the translocation of protons across the membrane. The protein is ATP synthase subunit a of Prochlorococcus marinus (strain MIT 9312).